Consider the following 338-residue polypeptide: Probable tRNA pseudouridine synthase B (338 aa).

The active-site Nucleophile is the Asp78. The PUA domain maps to 245 to 320 (LPKIILRDSA…LAATSVRIMM (76 aa)).

Belongs to the pseudouridine synthase TruB family. Type 2 subfamily.

It catalyses the reaction uridine(55) in tRNA = pseudouridine(55) in tRNA. In terms of biological role, could be responsible for synthesis of pseudouridine from uracil-55 in the psi GC loop of transfer RNAs. The chain is Probable tRNA pseudouridine synthase B from Methanosarcina barkeri (strain Fusaro / DSM 804).